The sequence spans 544 residues: Zinc finger and BTB domain-containing protein 7B (544 aa).

The 82-residue stretch at 34 to 115 (CDLTIRTQGL…AYTATLTTSS (82 aa)) folds into the BTB domain. Residue serine 150 is modified to Phosphoserine. Disordered regions lie at residues 171–221 (TTAS…ARAN) and 244–314 (GRLG…EDPI). Residues 186–200 (PQVPLLPPPPPPPRP) show a composition bias toward pro residues. Residues 201–210 (VARRSRKPRK) are compositionally biased toward basic residues. 2 positions are modified to N6-acetyllysine; by EP300; alternate: lysine 210 and lysine 216. Residues lysine 210 and lysine 216 each participate in a glycyl lysine isopeptide (Lys-Gly) (interchain with G-Cter in ubiquitin); alternate cross-link. Over residues 277 to 286 (FEGEEEEEEM) the composition is skewed to acidic residues. Lysine 339 is modified (N6-acetyllysine; by EP300; alternate). A Glycyl lysine isopeptide (Lys-Gly) (interchain with G-Cter in ubiquitin); alternate cross-link involves residue lysine 339. A required for interaction with and acetylation by EP300 region spans residues 348-404 (MPQECPVCHKIIHGAGKLPRHMRTHTGEKPFACEVCGVRFTRNDKLKIHMRKHTGER). Residues 350 to 372 (QECPVCHKIIHGAGKLPRHMRTH) form a C2H2-type 1 zinc finger. At threonine 373 the chain carries Phosphothreonine. 2 C2H2-type zinc fingers span residues 378–400 (FACEVCGVRFTRNDKLKIHMRKH) and 406–428 (YSCPHCPARFLHSYDLKNHMHLH). A C2H2-type 4; atypical zinc finger spans residues 434 to 458 (YECHLCHKAFAKEDHLQRHLKGQNC). Disordered regions lie at residues 465–493 (RRRKDDVAAPHYPPPSTTTSSPAGLDLSN) and 507–544 (WEQSATTGPPVTTQGPPEEEEEEGTPTTPQAEGAMESS). 2 stretches are compositionally biased toward low complexity: residues 511 to 522 (ATTGPPVTTQGP) and 531 to 544 (TPTTPQAEGAMESS).

In terms of assembly, homodimerizes. Interacts with NCL, NEDD4 and YBX1. Interacts with HNRNPU (via RNA-binding RGG-box region); the interaction facilitates the recruitment of long non-coding RNA Blnc1 by ZBTB7B. Interacts with HDAC4 and HDAC5; the interaction allows the recruitment of HDAC4 and HDAC5 on CD8 loci for deacetylation and possible inhibition of CD8 genes expression. Acetylated directly and specifically by EP300. EP300-mediated acetylation of Lys-210, Lys-216 and Lys-339 stabilizes the protein by antagonizing ubiquitin conjugation. Post-translationally, ubiquitinated, leading to proteasomal degradation. Competes with acetylation on Lys-210, Lys-216 and Lys-339. As to expression, widely expressed, with a higher level in skin. Expressed in thymus. Restricted to CD4 cells (mature single positive CD4(+) and intermediate CD4(+)CD8(+) cells). Expressed in the luminal epithelial cells in the mammary glands where is up-regulated at late pregnancy and lactation. Expression is enriched in brown fat.

The protein resides in the nucleus. In terms of biological role, transcription regulator that acts as a key regulator of lineage commitment of immature T-cell precursors. Exerts distinct biological functions in the mammary epithelial cells and T cells in a tissue-specific manner. Necessary and sufficient for commitment of CD4 lineage, while its absence causes CD8 commitment. Development of immature T-cell precursors (thymocytes) to either the CD4 helper or CD8 killer T-cell lineages correlates precisely with their T-cell receptor specificity for major histocompatibility complex class II or class I molecules, respectively. Cross-antagonism between ZBTB7B and CBF complexes are determinative to CD4 versus CD8 cell fate decision. Suppresses RUNX3 expression and imposes CD4+ lineage fate by inducing the SOCS suppressors of cytokine signaling. induces, as a transcriptional activator, SOCS genes expression which represses RUNX3 expression and promotes the CD4+ lineage fate. During CD4 lineage commitment, associates with multiple sites at the CD8 locus, acting as a negative regulator of the CD8 promoter and enhancers by epigenetic silencing through the recruitment of class II histone deacetylases, such as HDAC4 and HDAC5, to these loci. Regulates the development of IL17-producing CD1d-restricted naural killer (NK) T cells. Also functions as an important metabolic regulator in the lactating mammary glands. Critical feed-forward regulator of insulin signaling in mammary gland lactation, directly regulates expression of insulin receptor substrate-1 (IRS-1) and insulin-induced Akt-mTOR-SREBP signaling. Transcriptional repressor of the collagen COL1A1 and COL1A2 genes. May also function as a repressor of fibronectin and possibly other extracellular matrix genes. Potent driver of brown fat development, thermogenesis and cold-induced beige fat formation. Recruits the brown fat lncRNA 1 (Blnc1):HNRNPU ribonucleoprotein complex to activate thermogenic gene expression in brown and beige adipocytes. The sequence is that of Zinc finger and BTB domain-containing protein 7B from Mus musculus (Mouse).